Consider the following 299-residue polypeptide: Oxygen-dependent coproporphyrinogen-III oxidase (299 aa).

A substrate-binding site is contributed by Ser-92. Positions 96 and 106 each coordinate a divalent metal cation. Residue His-106 is the Proton donor of the active site. Position 108-110 (108-110) interacts with substrate; the sequence is NVR. A divalent metal cation is bound by residues His-145 and His-175. Residues 240–275 are important for dimerization; it reads YVEFNLVWDRGTLFGLQTGGRTESILMSMPPLVRWE. Residue 258-260 coordinates substrate; the sequence is GGR.

Belongs to the aerobic coproporphyrinogen-III oxidase family. In terms of assembly, homodimer. The cofactor is a divalent metal cation.

Its subcellular location is the cytoplasm. The catalysed reaction is coproporphyrinogen III + O2 + 2 H(+) = protoporphyrinogen IX + 2 CO2 + 2 H2O. It participates in porphyrin-containing compound metabolism; protoporphyrin-IX biosynthesis; protoporphyrinogen-IX from coproporphyrinogen-III (O2 route): step 1/1. Its function is as follows. Involved in the heme biosynthesis. Catalyzes the aerobic oxidative decarboxylation of propionate groups of rings A and B of coproporphyrinogen-III to yield the vinyl groups in protoporphyrinogen-IX. This Salmonella schwarzengrund (strain CVM19633) protein is Oxygen-dependent coproporphyrinogen-III oxidase.